Reading from the N-terminus, the 373-residue chain is Chaperone protein DnaJ (373 aa).

Residues 5-69 form the J domain; it reads DYYEVLGVNK…NKRVNYDQFG (65 aa). The CR-type zinc finger occupies 130–212; sequence GTKKEISIKK…CKGKGTENKT (83 aa). Residues C143, C146, C160, C163, C186, C189, C200, and C203 each contribute to the Zn(2+) site. CXXCXGXG motif repeat units follow at residues 143–150, 160–167, 186–193, and 200–207; these read CHTCNGDG, CSYCNGAG, CPKCEGSG, and CPTCKGKG.

This sequence belongs to the DnaJ family. In terms of assembly, homodimer. Zn(2+) is required as a cofactor.

Its subcellular location is the cytoplasm. Its function is as follows. Participates actively in the response to hyperosmotic and heat shock by preventing the aggregation of stress-denatured proteins and by disaggregating proteins, also in an autonomous, DnaK-independent fashion. Unfolded proteins bind initially to DnaJ; upon interaction with the DnaJ-bound protein, DnaK hydrolyzes its bound ATP, resulting in the formation of a stable complex. GrpE releases ADP from DnaK; ATP binding to DnaK triggers the release of the substrate protein, thus completing the reaction cycle. Several rounds of ATP-dependent interactions between DnaJ, DnaK and GrpE are required for fully efficient folding. Also involved, together with DnaK and GrpE, in the DNA replication of plasmids through activation of initiation proteins. The chain is Chaperone protein DnaJ from Staphylococcus epidermidis (strain ATCC 35984 / DSM 28319 / BCRC 17069 / CCUG 31568 / BM 3577 / RP62A).